We begin with the raw amino-acid sequence, 273 residues long: Shikimate dehydrogenase (NADP(+)) (273 aa).

Residues 14 to 16 and Thr-61 contribute to the shikimate site; that span reads SKS. Lys-65 acts as the Proton acceptor in catalysis. Glu-77 is an NADP(+) binding site. Residues Asn-86 and Asp-102 each coordinate shikimate. NADP(+)-binding positions include 126-130, 150-155, and Met-214; these read GAGGA and NRTLSK. Tyr-216 is a binding site for shikimate. NADP(+) is bound at residue Gly-238.

The protein belongs to the shikimate dehydrogenase family. As to quaternary structure, homodimer.

The catalysed reaction is shikimate + NADP(+) = 3-dehydroshikimate + NADPH + H(+). Its pathway is metabolic intermediate biosynthesis; chorismate biosynthesis; chorismate from D-erythrose 4-phosphate and phosphoenolpyruvate: step 4/7. Its function is as follows. Involved in the biosynthesis of the chorismate, which leads to the biosynthesis of aromatic amino acids. Catalyzes the reversible NADPH linked reduction of 3-dehydroshikimate (DHSA) to yield shikimate (SA). This Photobacterium profundum (strain SS9) protein is Shikimate dehydrogenase (NADP(+)).